The sequence spans 875 residues: Serine/threonine-protein kinase D2 (875 aa).

A compositionally biased stretch (low complexity) spans 1-12 (MAAAPSHPAGLP). The segment at 1-35 (MAAAPSHPAGLPGSPGPGSPPPPGGLDLQSPPPLL) is disordered. Positions 14–35 (SPGPGSPPPPGGLDLQSPPPLL) are enriched in pro residues. The residue at position 30 (Ser-30) is a Phosphoserine. A Phosphotyrosine modification is found at Tyr-87. The Phorbol-ester/DAG-type 1 zinc finger occupies 138–188 (PHALTVHSYRAPAFCDHCGEMLFGLVRQGLKCDGCGLNYHKRCAFSIPNNC). Residues Ser-197, Ser-198, Ser-200, Ser-203, Ser-206, Ser-211, Ser-212, and Ser-214 each carry the phosphoserine modification. A disordered region spans residues 224-247 (RSTTDLLPRRPPSSSSSSSSSSFY). Residues 236–245 (SSSSSSSSSS) are compositionally biased toward low complexity. Ser-244 bears the Phosphoserine; by CSNK1D and CSNK1E mark. Phosphoserine is present on Ser-245. A Phorbol-ester/DAG-type 2 zinc finger spans residues 265–315 (PHTFLIHSYTRPTVCQACKKLLKGLFRQGLQCKDCKFNCHKRCATRVPNDC). The interval 332 to 374 (DYSEADKSSISDELEDSGVIPGSHSESALHASEEEEGEGHKAQ) is disordered. Residues 398–510 (TTLREGWVVH…WETAIRQALM (113 aa)) form the PH domain. A Phosphotyrosine modification is found at Tyr-408. Phosphotyrosine; by ABL1 is present on Tyr-439. Ser-519 bears the Phosphoserine mark. Positions 552-808 (IFPDEVLGSG…VDKSLSHPWL (257 aa)) constitute a Protein kinase domain. Residues 558–566 (LGSGQFGVV) and Lys-581 contribute to the ATP site. Asp-675 serves as the catalytic Proton acceptor. Phosphoserine; by PKC is present on Ser-707. Position 711 is a phosphoserine; by autocatalysis (Ser-711). Phosphotyrosine; by ABL1 is present on Tyr-718. Residues 725–727 (LNQ) carry the Important for ABL1-mediated Tyr-718 phosphorylation motif. Ser-873 is subject to Phosphoserine; by autocatalysis.

Belongs to the protein kinase superfamily. CAMK Ser/Thr protein kinase family. PKD subfamily. In terms of assembly, interacts (via C-terminus) with LCK. Interacts (via N-terminus and zing-finger domain 1 and 2) with PRKCD in response to oxidative stress; the interaction is independent of PRKD2 tyrosine phosphorylation. Mg(2+) serves as cofactor. In terms of processing, phosphorylation of Ser-873 correlates with the activation status of the kinase. Ser-707 is probably phosphorylated by PKC. Phosphorylation at Ser-244 by CSNK1D and CSNK1E promotes nuclear localization and substrate targeting. Phosphorylation at Ser-244, Ser-707 and Ser-711 is required for nuclear localization. Phosphorylated at Tyr-438 by ABL1 in response to oxidative stress. Phosphorylated at Tyr-718 by ABL1 specifically in response to oxidative stress; requires prior phosphorylation at Ser-707 or/and Ser-711.

The protein resides in the cytoplasm. The protein localises to the cell membrane. Its subcellular location is the golgi apparatus. It localises to the trans-Golgi network. The catalysed reaction is L-seryl-[protein] + ATP = O-phospho-L-seryl-[protein] + ADP + H(+). It carries out the reaction L-threonyl-[protein] + ATP = O-phospho-L-threonyl-[protein] + ADP + H(+). Its activity is regulated as follows. Activated by DAG and phorbol esters. Phorbol-ester/DAG-type domains bind DAG, mediating translocation to membranes. Autophosphorylation of Ser-711 and phosphorylation of Ser-707 by PKC relieves auto-inhibition by the PH domain. Catalytic activity is further increased by phosphorylation at Tyr-718 in response to oxidative stress. Serine/threonine-protein kinase that converts transient diacylglycerol (DAG) signals into prolonged physiological effects downstream of PKC, and is involved in the regulation of cell proliferation via MAPK1/3 (ERK1/2) signaling, oxidative stress-induced NF-kappa-B activation, inhibition of HDAC7 transcriptional repression, signaling downstream of T-cell antigen receptor (TCR) and cytokine production, and plays a role in Golgi membrane trafficking, angiogenesis, secretory granule release and cell adhesion. May potentiate mitogenesis induced by the neuropeptide bombesin by mediating an increase in the duration of MAPK1/3 (ERK1/2) signaling, which leads to accumulation of immediate-early gene products including FOS that stimulate cell cycle progression. In response to oxidative stress, is phosphorylated at Tyr-438 and Tyr-718 by ABL1, which leads to the activation of PRKD2 without increasing its catalytic activity, and mediates activation of NF-kappa-B. In response to the activation of the gastrin receptor CCKBR, is phosphorylated at Ser-244 by CSNK1D and CSNK1E, translocates to the nucleus, phosphorylates HDAC7, leading to nuclear export of HDAC7 and inhibition of HDAC7 transcriptional repression of NR4A1/NUR77. Upon TCR stimulation, is activated independently of ZAP70, translocates from the cytoplasm to the nucleus and is required for interleukin-2 (IL2) promoter up-regulation. During adaptive immune responses, is required in peripheral T-lymphocytes for the production of the effector cytokines IL2 and IFNG after TCR engagement and for optimal induction of antibody responses to antigens. In epithelial cells stimulated with lysophosphatidic acid (LPA), is activated through a PKC-dependent pathway and mediates LPA-stimulated interleukin-8 (IL8) secretion via a NF-kappa-B-dependent pathway. During TCR-induced T-cell activation, interacts with and is activated by the tyrosine kinase LCK, which results in the activation of the NFAT transcription factors. In the trans-Golgi network (TGN), regulates the fission of transport vesicles that are on their way to the plasma membrane and in polarized cells is involved in the transport of proteins from the TGN to the basolateral membrane. Plays an important role in endothelial cell proliferation and migration prior to angiogenesis, partly through modulation of the expression of KDR/VEGFR2 and FGFR1, two key growth factor receptors involved in angiogenesis. In secretory pathway, is required for the release of chromogranin-A (CHGA)-containing secretory granules from the TGN. Downstream of PRKCA, plays important roles in angiotensin-2-induced monocyte adhesion to endothelial cells. This Mus musculus (Mouse) protein is Serine/threonine-protein kinase D2 (Prkd2).